A 299-amino-acid polypeptide reads, in one-letter code: Taste receptor type 2 member 19 (299 aa).

A topological domain (extracellular) is located at residue Met1. Residues 2–22 traverse the membrane as a helical segment; sequence MCFLLIISSILVVFAFVLGNV. At 23–55 the chain is on the cytoplasmic side; the sequence is ANGFIALVNVIDWVNTRKISSAEQILTALVVSR. A helical transmembrane segment spans residues 56–76; it reads IGLLWVMLFLWYATVFNSALY. At 77–87 the chain is on the extracellular side; that stretch reads GLEVRIVASNA. A helical transmembrane segment spans residues 88 to 108; sequence WAVTNHFSMWLAASLSIFCLL. At 109-127 the chain is on the cytoplasmic side; sequence KIANFSNLISLHLKKRIKS. A helical membrane pass occupies residues 128–148; sequence VVLVILLGPLVFLICNLAVIT. Residues 149-181 lie on the Extracellular side of the membrane; the sequence is MDERVWTKEYEGNVTWKIKLRNAIHLSSLTVTT. Asn161 carries an N-linked (GlcNAc...) asparagine glycan. The helical transmembrane segment at 182–202 threads the bilayer; that stretch reads LANLIPFTLSLICFLLLICSL. The Cytoplasmic segment spans residues 203-226; that stretch reads CKHLKKMRLHSKGSQDPSTKVHIK. The helical transmembrane segment at 227–247 threads the bilayer; that stretch reads ALQTVTSFLMLFAIYFLCIIT. Residues 248–259 are Extracellular-facing; that stretch reads STWNLRTQQSKL. A helical transmembrane segment spans residues 260–280; sequence VLLLCQTVAIMYPSFHSFILI. Residues 281-299 are Cytoplasmic-facing; the sequence is MGSRKLKQTFLSVLWQMTR.

Belongs to the G-protein coupled receptor T2R family. As to expression, expressed in subsets of taste receptor cells of the tongue and exclusively in gustducin-positive cells.

Its subcellular location is the membrane. Functionally, receptor that may play a role in the perception of bitterness and is gustducin-linked. May play a role in sensing the chemical composition of the gastrointestinal content. The activity of this receptor may stimulate alpha gustducin, mediate PLC-beta-2 activation and lead to the gating of TRPM5. The protein is Taste receptor type 2 member 19 (TAS2R19) of Homo sapiens (Human).